We begin with the raw amino-acid sequence, 385 residues long: Lipoyl synthase, mitochondrial (385 aa).

The disordered stretch occupies residues 18-40 (TKAKNRTFSSSTVESSTKQPPQF). [4Fe-4S] cluster contacts are provided by Cys113, Cys118, Cys124, Cys144, Cys148, Cys151, and Ser360. Residues 129–349 (ETGTATATIM…KTLGMEMGFR (221 aa)) enclose the Radical SAM core domain.

Belongs to the radical SAM superfamily. Lipoyl synthase family. Requires [4Fe-4S] cluster as cofactor.

It localises to the mitochondrion. It catalyses the reaction [[Fe-S] cluster scaffold protein carrying a second [4Fe-4S](2+) cluster] + N(6)-octanoyl-L-lysyl-[protein] + 2 oxidized [2Fe-2S]-[ferredoxin] + 2 S-adenosyl-L-methionine + 4 H(+) = [[Fe-S] cluster scaffold protein] + N(6)-[(R)-dihydrolipoyl]-L-lysyl-[protein] + 4 Fe(3+) + 2 hydrogen sulfide + 2 5'-deoxyadenosine + 2 L-methionine + 2 reduced [2Fe-2S]-[ferredoxin]. The protein operates within protein modification; protein lipoylation via endogenous pathway; protein N(6)-(lipoyl)lysine from octanoyl-[acyl-carrier-protein]: step 2/2. Functionally, catalyzes the radical-mediated insertion of two sulfur atoms into the C-6 and C-8 positions of the octanoyl moiety bound to the lipoyl domains of lipoate-dependent enzymes, thereby converting the octanoylated domains into lipoylated derivatives. This is Lipoyl synthase, mitochondrial from Populus trichocarpa (Western balsam poplar).